Consider the following 228-residue polypeptide: 2,3-bisphosphoglycerate-dependent phosphoglycerate mutase (228 aa).

Residues arginine 8–asparagine 15, threonine 21–glycine 22, arginine 60, glutamate 87–tyrosine 90, lysine 98, arginine 114–arginine 115, and glycine 180–asparagine 181 contribute to the substrate site. Histidine 9 functions as the Tele-phosphohistidine intermediate in the catalytic mechanism. The active-site Proton donor/acceptor is glutamate 87.

It belongs to the phosphoglycerate mutase family. BPG-dependent PGAM subfamily. Homodimer.

It carries out the reaction (2R)-2-phosphoglycerate = (2R)-3-phosphoglycerate. The protein operates within carbohydrate degradation; glycolysis; pyruvate from D-glyceraldehyde 3-phosphate: step 3/5. In terms of biological role, catalyzes the interconversion of 2-phosphoglycerate and 3-phosphoglycerate. This Erythrobacter litoralis (strain HTCC2594) protein is 2,3-bisphosphoglycerate-dependent phosphoglycerate mutase.